The chain runs to 160 residues: uncharacterized protein (160 aa).

The N-acetyltransferase domain maps to 7–151 (LLINYKTLEE…NPLIWHPDMD (145 aa)).

This is an uncharacterized protein from Bacillus subtilis (strain 168).